Here is a 214-residue protein sequence, read N- to C-terminus: Late embryogenesis abundant protein At1g64065 (214 aa).

The chain crosses the membrane as a helical span at residues 41–61 (VYSLTIIVIIFALCLILSSIF).

It belongs to the LEA type 2 family.

The protein resides in the membrane. This Arabidopsis thaliana (Mouse-ear cress) protein is Late embryogenesis abundant protein At1g64065.